A 427-amino-acid polypeptide reads, in one-letter code: Glutamate-1-semialdehyde 2,1-aminomutase (427 aa).

At Lys265 the chain carries N6-(pyridoxal phosphate)lysine.

Belongs to the class-III pyridoxal-phosphate-dependent aminotransferase family. HemL subfamily. Homodimer. It depends on pyridoxal 5'-phosphate as a cofactor.

Its subcellular location is the cytoplasm. The catalysed reaction is (S)-4-amino-5-oxopentanoate = 5-aminolevulinate. The protein operates within porphyrin-containing compound metabolism; protoporphyrin-IX biosynthesis; 5-aminolevulinate from L-glutamyl-tRNA(Glu): step 2/2. The protein is Glutamate-1-semialdehyde 2,1-aminomutase of Burkholderia thailandensis (strain ATCC 700388 / DSM 13276 / CCUG 48851 / CIP 106301 / E264).